The following is a 311-amino-acid chain: Geranylgeranyl transferase type-2 subunit alpha (311 aa).

Residues 12–43 (EKAKAQRLKELEKIESYNKLVKSFEELREKQN) are a coiled coil. PFTA repeat units follow at residues 49–82 (ISLSVSKLVLIENPEFYTIWNYRRLAILQFTETK), 93–126 (NEMKFLEECIQRFTKSYWIWFHRQWIALRMDNCD), 129–162 (REMKLCTKLLNFDLRNFHCWGHRRFILKHSNIKL), 164–197 (DELKYTTEKVEQNFSNYSAWHQRSSILPKIYKEP), and 206–239 (EEFELVRNAVYTEPKDSSSWIYHKWLVATIKSIP).

Belongs to the protein prenyltransferase subunit alpha family. As to quaternary structure, heterodimer of an alpha and a beta subunit.

It carries out the reaction geranylgeranyl diphosphate + L-cysteinyl-[protein] = S-geranylgeranyl-L-cysteinyl-[protein] + diphosphate. Catalyzes the transfer of a geranylgeranyl moiety from geranylgeranyl diphosphate to proteins with a C-terminal sequence motif -XCC or -XCXC, where both cysteines may become modified. In Dictyostelium discoideum (Social amoeba), this protein is Geranylgeranyl transferase type-2 subunit alpha (rabggta).